Consider the following 483-residue polypeptide: MFS-type transporter hepF (483 aa).

The interval methionine 1–aspartate 31 is disordered. Basic and acidic residues predominate over residues lysine 7–glutamate 17. Helical transmembrane passes span threonine 89–isoleucine 109, isoleucine 124–valine 144, phenylalanine 147–leucine 167, phenylalanine 179–threonine 199, tryptophan 206–threonine 226, proline 276–valine 296, isoleucine 311–isoleucine 331, proline 357–valine 377, methionine 385–valine 405, alanine 416–leucine 436, and glycine 448–isoleucine 468.

It belongs to the major facilitator superfamily.

It localises to the cell membrane. MFS-type transporter; part of the gene cluster that mediates the biosynthesis of heptelidic acid (HA), a sesquiterpene lactone that acts as an inhibitor of glyceraldehyde-3-phosphatedehydrogenase (GAPDH) and a growth inhibitor of the salt-tolerant lactic acid bacteria in soy sauce brewing. Might be required for efficient secretion of heptelidic acid. The sequence is that of MFS-type transporter hepF (hepF) from Aspergillus oryzae (strain ATCC 42149 / RIB 40) (Yellow koji mold).